The primary structure comprises 269 residues: Surfeit locus protein 4 (269 aa).

Transmembrane regions (helical) follow at residues 65–85 (LASS…VLVL), 92–112 (YACF…SILW), 179–199 (FFSI…AIGF), 203–223 (LAAL…NAFW), and 242–262 (TMSV…GVSM). A Di-lysine motif motif is present at residues 266–269 (KKEW).

Belongs to the SURF4 family. In terms of assembly, found in a complex composed at least of SURF4, TMED2 and TMED10. May interact with LMAN1. Interacts with ZFYVE27 and with KIF5A in a ZFYVE27-dependent manner. Interacts with STING1. Interacts with SAR1B. Interacts with TMEM41B.

It localises to the endoplasmic reticulum membrane. Its subcellular location is the endoplasmic reticulum-Golgi intermediate compartment membrane. The protein resides in the golgi apparatus membrane. Endoplasmic reticulum cargo receptor that mediates the export of lipoproteins by recruiting cargos into COPII vesicles to facilitate their secretion. Acts as a cargo receptor for lipoproteins bearing both APOB and APOA1, thereby regulating lipoprotein delivery and the maintenance of lipid homeostasis. Synergizes with the GTPase SAR1B to mediate transport of circulating lipoproteins. Promotes the secretion of PCSK9. Also mediates the efficient secretion of erythropoietin (EPO). May also play a role in the maintenance of the architecture of the endoplasmic reticulum-Golgi intermediate compartment and of the Golgi. The sequence is that of Surfeit locus protein 4 from Mus musculus (Mouse).